The chain runs to 290 residues: L-proline cis-3-hydroxylase 2 (290 aa).

Residues His107, Asp109, and His158 each coordinate Fe cation. Residue Arg168 coordinates 2-oxoglutarate.

Belongs to the L-proline cis-4-/cis-3-hydroxylase family. As to quaternary structure, homodimer. The cofactor is Fe(2+).

The enzyme catalyses L-proline + 2-oxoglutarate + O2 = cis-3-hydroxy-L-proline + succinate + CO2. Inhibited by metal ions such as Co(2+), Zn(2+), Ni(2+) or Cu(2+). Is also inhibited by EDTA in vitro. Functionally, dioxygenase that catalyzes the 2-oxoglutarate-dependent selective hydroxylation of free L-proline to cis-3-hydroxy-L-proline (cis-3-Hyp). In Streptomyces sp, this protein is L-proline cis-3-hydroxylase 2.